The following is a 158-amino-acid chain: UPF0725 protein At3g57210 (158 aa).

It belongs to the UPF0725 (EMB2204) family.

The polypeptide is UPF0725 protein At3g57210 (Arabidopsis thaliana (Mouse-ear cress)).